We begin with the raw amino-acid sequence, 1237 residues long: METRTAENTAIFMCKCCNLFSPNQSELVTHVSEKHGEEGVNVDDVIIPLRPLNTPENPNPSKGGDEFLVMKRKRGRPKGSTKKPSTEEEVVENLVSPSEDGPLATEEGSRLAPSSLECSKCCRKFSNTRQLRKHICIIVLNLGEEDGDAGNESDLDLEKTYKEDDREKASKRPRAQKTEKVQKISGKEAGQLSGAKKPIISVVLTAHEAIPGATKIIPVEAGPPETGAPPPETTAADLVPRRGYQEYAIQQTPYEQPMKSSRLGPTQLKIFTCEYCNKVFKFKHSLQAHLRIHTNEKPYKCSQCSYASAIKANLNVHLRKHTGEKFACDYCSFTCLSKGHLKVHIERVHKKIKQHCRFCKKKYSDVKNLIKHIRDMHDPQDKKVKEALDELRLMTREGKRQLLYDCHICERKFKNELDRDRHMLVHGDKWPFACELCGHGATKYQALELHVRKHPFVYVCALCLKKFVSSIRLRSHIREVHGAAQETLVFTSSINQSFCLLEPGGDIQQEALGDQLQLAAEEFVCPEIDVRKEEACPGEAQPEVGLRELVVPGDAHAPPPGPLATPQSESSSLSPCKLETTVVSSDLNSLGVVSDDFLLKSDTSSAEPPAAAEATSDTQHRDSAQTQGEEVTLLLAKAKSAGPDPESSPGGRQKVGALPASESDSSTCLRANPTEASDLLPTVTDGGDLGVCQPDSCTPSSEHHPGSTAFMKVLDSLQKKQMNTSLCERIRKVYGDLECEYCGKLFWYQVHFDMHVRTHTREHLYYCSQCHYSSITKNCLKRHVIQKHSNILLKCPTDGCDYSTPDKYKLQAHLKVHTELDKRSYSCPVCEKSFSEDRLIKSHIKTNHPEVSMNTISEVLGRRVQLKGLIGKRAMKCPYCDFYFMKNGSDLQRHIWAHEGVKPFKCSLCEYATRSKSNLKAHMNRHSTEKTHLCDMCGKKFKSKGTLKSHKLLHTSDGKQFKCTVCDYTAAQKPQLLRHMEQHASFKPFRCAHCHYSCNISGSLKRHYNRKHPNEEYTNVGSGELAAEALIQQGGLKCPVCSFVYGTKWEFNRHLKNKHGLKVVEIDGDPKWEPAAETPEEPSTQYLYITEAEDVQGTQAAVAALQDLRYTSESGDRLDPTAVNILQQIIELGSETHDAAAVASVVAMAPGTVTVVKQVTDEEPSSNHTVMIQETLQQASVELAEQHHLVVSSDDVEGIETVTVYTQGGEASEFIVYVQEAVQPVEEQVGEQPAPEL.

A C2H2-type 1 zinc finger spans residues 12-35 (FMCKCCNLFSPNQSELVTHVSEKH). The segment at 50–110 (RPLNTPENPN…GPLATEEGSR (61 aa)) is disordered. Residues 70–81 (MKRKRGRPKGST) are compositionally biased toward basic residues. The segment at 116–141 (LECSKCCRKFSNTRQLRKHICIIVLN) adopts a C2H2-type 2; degenerate zinc-finger fold. The disordered stretch occupies residues 147 to 188 (GDAGNESDLDLEKTYKEDDREKASKRPRAQKTEKVQKISGKE). Basic and acidic residues predominate over residues 156-186 (DLEKTYKEDDREKASKRPRAQKTEKVQKISG). C2H2-type zinc fingers lie at residues 271–293 (FTCE…LRIH), 299–321 (YKCS…LRKH), 326–349 (FACD…ERVH), 354–377 (QHCR…RDMH), 404–426 (YDCH…MLVH), 432–454 (FACE…VRKH), and 458–481 (YVCA…REVH). Cysteine 273, cysteine 276, histidine 289, histidine 293, cysteine 301, cysteine 304, histidine 317, histidine 321, cysteine 328, cysteine 331, histidine 344, histidine 349, cysteine 356, cysteine 359, histidine 372, histidine 377, cysteine 406, cysteine 409, histidine 422, and histidine 426 together coordinate Zn(2+). Positions 460, 463, 476, and 481 each coordinate Zn(2+). Disordered regions lie at residues 551-576 (VPGD…LSPC) and 601-671 (SDTS…CLRA). Positions 565 to 574 (TPQSESSSLS) are enriched in polar residues. Over residues 601–617 (SDTSSAEPPAAAEATSD) the composition is skewed to low complexity. C2H2-type zinc fingers lie at residues 737 to 759 (LECE…VRTH), 765 to 788 (YYCS…IQKH), 793 to 817 (LKCP…LKVH), and 825 to 848 (YSCP…KTNH). Cysteine 767, cysteine 770, histidine 783, histidine 788, cysteine 795, cysteine 800, histidine 813, histidine 817, cysteine 827, cysteine 830, histidine 843, histidine 848, cysteine 877, cysteine 880, histidine 894, histidine 898, cysteine 906, cysteine 909, histidine 922, histidine 926, cysteine 934, cysteine 937, histidine 950, and leucine 953 together coordinate Zn(2+). A C2H2-type 14; degenerate zinc finger spans residues 875–898 (MKCPYCDFYFMKNGSDLQRHIWAH). 5 C2H2-type zinc fingers span residues 904–926 (FKCS…MNRH), 932–954 (HLCD…KLLH), 961–983 (FKCT…MEQH), 989–1012 (FRCA…NRKH), and 1036–1059 (LKCP…KNKH).

Detected in spleen and thymus but not in liver, muscle, heart, kidney, brain, bone marrow or pancreas. Expressed in CD19+, CD4+ and CD8+ lymphocytes but not in CD11b+ lymphocytes or peritoneal macrophages (at protein level).

It is found in the nucleus. The protein localises to the cytoplasm. The protein resides in the cytosol. Its function is as follows. May be involved in transcriptional regulation. Overexpression causes down-regulation of a number of genes involved in the immune response. Some genes are also up-regulated. The chain is Zinc finger protein ZFAT (Zfat) from Mus musculus (Mouse).